We begin with the raw amino-acid sequence, 311 residues long: tRNA dimethylallyltransferase (311 aa).

12-19 is an ATP binding site; sequence GPTASGKT. 14–19 serves as a coordination point for substrate; sequence TASGKT. Interaction with substrate tRNA stretches follow at residues 37-40, 161-165, and 241-246; these read DSAL, QRINR, and RCVGYR.

This sequence belongs to the IPP transferase family. In terms of assembly, monomer. Mg(2+) is required as a cofactor.

The enzyme catalyses adenosine(37) in tRNA + dimethylallyl diphosphate = N(6)-dimethylallyladenosine(37) in tRNA + diphosphate. Its function is as follows. Catalyzes the transfer of a dimethylallyl group onto the adenine at position 37 in tRNAs that read codons beginning with uridine, leading to the formation of N6-(dimethylallyl)adenosine (i(6)A). This Histophilus somni (strain 129Pt) (Haemophilus somnus) protein is tRNA dimethylallyltransferase.